The chain runs to 1001 residues: Chloride channel protein clh-3 (1001 aa).

Residues 1–48 (MGIGTKILSKIEKNKTSDGLTIPLTPTTQKQSSSWCSFESIKTFFRTV) lie on the Cytoplasmic side of the membrane. 2 helical membrane-spanning segments follow: residues 49–85 (IRDWIFLALLGFIMASLSFGMDYAILNLQNGQMRLFD) and 91–117 (HFTLAYLVWVGYVVGLILLSAVCAHYI). The Selectivity filter part_1 signature appears at 123 to 127 (GSGIP). Serine 124 is a binding site for chloride. An intramembrane region (helical) is located at residues 126-133 (IPEMKTIL). The next 2 helical transmembrane spans lie at 142 to 160 (LSVRTLLSKMIGLTLSLGS) and 167 to 185 (EGPFVHVASVVASQLTRLV). Positions 165-169 (GKEGP) match the Selectivity filter part_2 motif. 2 intramembrane regions (helical) span residues 202 to 214 (MLAAGCAVGVACT) and 218 to 226 (PIGGVLFSI). The next 5 helical transmembrane spans lie at 238-258 (YWRGFFAATCSATLFRILRMF), 285-313 (LPIFALIGLVCGLAGSIFVYLHRRTVLFL), 322-341 (IFQKYWLIYPIFIATFISSL), 405-425 (YSPFVTLSSFQVVYFFLAILA), and 433-456 (GIFMPVFVLGAAFGRLVGEGVFSL). Residues 433-437 (GIFMP) carry the Selectivity filter part_3 motif. Positions 434 and 435 each coordinate chloride. The helical intramembrane region spans 473 to 487 (GVYAVVGAAAFCGAV). The segment at residues 488–489 (TH) is an intramembrane region (note=Loop between two helices). The segment at residues 490 to 501 (TVSVAVIVFELT) is an intramembrane region (helical). Residues 502 to 506 (GQLCH) constitute an intramembrane region (note=Loop between two helices). A helical membrane pass occupies residues 507 to 524 (LLPVMIAVLIANAVASYL). The Cytoplasmic portion of the chain corresponds to 525-1001 (QPSIYDSIIR…LPDDVHDEKF (477 aa)). Chloride is bound at residue tyrosine 529. Residues 560–619 (MISPLVYIAKDSTVGDIKRALETKTRIRAFPLVENMESLALVGSVSRSQLQRYVDSQIGT) form the CBS 1 domain. Residues 625–657 (EATRRIKQRLEDEESERKRREESKSDDTEDSLE) are a coiled coil. The span at 634-650 (LEDEESERKRREESKSD) shows a compositional bias: basic and acidic residues. The disordered stretch occupies residues 634-662 (LEDEESERKRREESKSDDTEDSLETTGAG). Serine 742 and serine 747 each carry phosphoserine; by gck-3. The CBS 2 domain occupies 788–845 (IDSTPFQLSEYTSLFKAHSLFSLLGLNRAYVTKKGQLIGVVALKELRLAIEYLQSGKV).

This sequence belongs to the chloride channel (TC 2.A.49) family. As to quaternary structure, isoform a interacts (via RFLI motif) with gck-3 (via C-terminus). In terms of processing, phosphorylated by gck-3; phosphorylation at both Ser-742 and Ser-747 is required to inhibit channel activity. Dephosphorylated by gsp-1/2 during cell swelling and oocyte meiotic maturation, which results in channel activation. As to expression, expressed in excretory cell, 4 anterior epithelial cells of the intestine, hermaphrodite-specific neurons and enteric muscles. Expressed also in vulva and uterus. Isoform a is expressed in oocytes (at protein level).

It is found in the cell membrane. Voltage-gated chloride channel. Insensitive to depolarizing conditioning voltages, requires low voltages for activation, insensitive to chloride levels and has a mild sensitivity to low pH. Channel gating properties are conferred by the cytoplasmic C-terminus. Plays a role in egg laying by modulating hermaphrodite-specific neurons (HSN) excitability and the ovulatory contractions of gap-junction-coupled gonadal sheath cells. When active, may prevent tubular formation of the excretory canals. Activated during oocyte meiotic maturation and by membrane hyperpolarization and cell swelling. Inhibited by Zn(2+) and to a lesser extent by Cd(2+). In terms of biological role, voltage-gated chloride channel. Sensitive to depolarizing conditioning voltages, requires stronger voltages for activation and activation is slower, is inhibited by low concentrations of chloride and is activated by low pH. Channel gating properties are conferred by the cytoplasmic C-terminus. This chain is Chloride channel protein clh-3, found in Caenorhabditis elegans.